Here is a 547-residue protein sequence, read N- to C-terminus: Chaperonin GroEL (547 aa).

ATP is bound by residues 30–33 (TLGP), lysine 51, 87–91 (DGTTT), glycine 415, and aspartate 496.

It belongs to the chaperonin (HSP60) family. As to quaternary structure, forms a cylinder of 14 subunits composed of two heptameric rings stacked back-to-back. Interacts with the co-chaperonin GroES.

The protein resides in the cytoplasm. It catalyses the reaction ATP + H2O + a folded polypeptide = ADP + phosphate + an unfolded polypeptide.. In terms of biological role, together with its co-chaperonin GroES, plays an essential role in assisting protein folding. The GroEL-GroES system forms a nano-cage that allows encapsulation of the non-native substrate proteins and provides a physical environment optimized to promote and accelerate protein folding. The protein is Chaperonin GroEL of Haemophilus ducreyi (strain 35000HP / ATCC 700724).